Consider the following 301-residue polypeptide: UDP-N-acetylenolpyruvoylglucosamine reductase 1 (301 aa).

Positions 29–196 (KIGGPADILI…LEAVFQLQAG (168 aa)) constitute an FAD-binding PCMH-type domain. Arginine 174 is an active-site residue. Residue serine 225 is the Proton donor of the active site. Residue glutamate 295 is part of the active site.

This sequence belongs to the MurB family. The cofactor is FAD.

The protein resides in the cytoplasm. The catalysed reaction is UDP-N-acetyl-alpha-D-muramate + NADP(+) = UDP-N-acetyl-3-O-(1-carboxyvinyl)-alpha-D-glucosamine + NADPH + H(+). It participates in cell wall biogenesis; peptidoglycan biosynthesis. In terms of biological role, cell wall formation. This is UDP-N-acetylenolpyruvoylglucosamine reductase 1 (murB1) from Bacillus cereus (strain ATCC 14579 / DSM 31 / CCUG 7414 / JCM 2152 / NBRC 15305 / NCIMB 9373 / NCTC 2599 / NRRL B-3711).